The sequence spans 431 residues: 5-methylthioadenosine/S-adenosylhomocysteine deaminase (431 aa).

Positions 66 and 68 each coordinate Zn(2+). Glu95, Arg147, and His185 together coordinate substrate. His212 serves as a coordination point for Zn(2+). Residues Glu215 and Asp300 each coordinate substrate. Asp300 is a binding site for Zn(2+).

This sequence belongs to the metallo-dependent hydrolases superfamily. MTA/SAH deaminase family. It depends on Zn(2+) as a cofactor.

The enzyme catalyses S-adenosyl-L-homocysteine + H2O + H(+) = S-inosyl-L-homocysteine + NH4(+). It carries out the reaction S-methyl-5'-thioadenosine + H2O + H(+) = S-methyl-5'-thioinosine + NH4(+). Its function is as follows. Catalyzes the deamination of 5-methylthioadenosine and S-adenosyl-L-homocysteine into 5-methylthioinosine and S-inosyl-L-homocysteine, respectively. Is also able to deaminate adenosine. This chain is 5-methylthioadenosine/S-adenosylhomocysteine deaminase, found in Acetivibrio thermocellus (strain ATCC 27405 / DSM 1237 / JCM 9322 / NBRC 103400 / NCIMB 10682 / NRRL B-4536 / VPI 7372) (Clostridium thermocellum).